The following is a 310-amino-acid chain: Hydroxyacylglutathione hydrolase, mitochondrial (310 aa).

6 residues coordinate Zn(2+): histidine 104, histidine 106, aspartate 108, histidine 109, histidine 160, and aspartate 184. Substrate contacts are provided by residues 193–195, 223–225, and 299–302; these read KFF, HEY, and RKEK. Histidine 223 lines the Zn(2+) pocket.

Belongs to the metallo-beta-lactamase superfamily. Glyoxalase II family. In terms of assembly, monomer. It depends on Zn(2+) as a cofactor.

It is found in the mitochondrion matrix. The protein localises to the cytoplasm. It catalyses the reaction an S-(2-hydroxyacyl)glutathione + H2O = a 2-hydroxy carboxylate + glutathione + H(+). The enzyme catalyses (R)-S-lactoylglutathione + H2O = (R)-lactate + glutathione + H(+). Functionally, thiolesterase that catalyzes the hydrolysis of S-D-lactoyl-glutathione to form glutathione and D-lactic acid. The chain is Hydroxyacylglutathione hydrolase, mitochondrial (HAGH) from Gallus gallus (Chicken).